Reading from the N-terminus, the 433-residue chain is uncharacterized protein (433 aa).

The HD domain occupies 61–178; that stretch reads RFNHSLGVYE…QIDADRMDYL (118 aa).

This is an uncharacterized protein from Bacillus subtilis (strain 168).